Consider the following 600-residue polypeptide: Chaperone protein DnaK (600 aa).

Position 175 is a phosphothreonine; by autocatalysis (T175). Residues 572–600 (FAQQTQQQDPNNQKDDVTEATVTDDSTKK) are disordered. Polar residues predominate over residues 591-600 (ATVTDDSTKK).

It belongs to the heat shock protein 70 family.

Acts as a chaperone. In Ureaplasma urealyticum serovar 10 (strain ATCC 33699 / Western), this protein is Chaperone protein DnaK.